A 289-amino-acid polypeptide reads, in one-letter code: 3-methyl-2-oxobutanoate hydroxymethyltransferase (289 aa).

Residues 1–15 are compositionally biased toward polar residues; it reads MSTTFKLDTSTSRAN. Residues 1 to 21 form a disordered region; that stretch reads MSTTFKLDTSTSRANPTPAPM. 2 residues coordinate Mg(2+): Asp-67 and Asp-106. Residues 67 to 68, Asp-106, and Lys-136 contribute to the 3-methyl-2-oxobutanoate site; that span reads DS. Position 138 (Glu-138) interacts with Mg(2+). Glu-205 acts as the Proton acceptor in catalysis.

It belongs to the PanB family. Homodecamer; pentamer of dimers. It depends on Mg(2+) as a cofactor.

It is found in the cytoplasm. It carries out the reaction 3-methyl-2-oxobutanoate + (6R)-5,10-methylene-5,6,7,8-tetrahydrofolate + H2O = 2-dehydropantoate + (6S)-5,6,7,8-tetrahydrofolate. It participates in cofactor biosynthesis; (R)-pantothenate biosynthesis; (R)-pantoate from 3-methyl-2-oxobutanoate: step 1/2. Catalyzes the reversible reaction in which hydroxymethyl group from 5,10-methylenetetrahydrofolate is transferred onto alpha-ketoisovalerate to form ketopantoate. The polypeptide is 3-methyl-2-oxobutanoate hydroxymethyltransferase (Erythrobacter litoralis (strain HTCC2594)).